The chain runs to 214 residues: ATP-dependent dethiobiotin synthetase BioD (214 aa).

10–15 (GIGKTY) is an ATP binding site. Mg(2+) is bound at residue T14. K35 is an active-site residue. T39 serves as a coordination point for substrate. ATP is bound by residues D44, 109–112 (EGAG), and 169–170 (NC). D44 and E109 together coordinate Mg(2+).

Belongs to the dethiobiotin synthetase family. As to quaternary structure, homodimer. Requires Mg(2+) as cofactor.

The protein localises to the cytoplasm. The enzyme catalyses (7R,8S)-7,8-diammoniononanoate + CO2 + ATP = (4R,5S)-dethiobiotin + ADP + phosphate + 3 H(+). It functions in the pathway cofactor biosynthesis; biotin biosynthesis; biotin from 7,8-diaminononanoate: step 1/2. Functionally, catalyzes a mechanistically unusual reaction, the ATP-dependent insertion of CO2 between the N7 and N8 nitrogen atoms of 7,8-diaminopelargonic acid (DAPA, also called 7,8-diammoniononanoate) to form a ureido ring. This is ATP-dependent dethiobiotin synthetase BioD from Methanocaldococcus jannaschii (strain ATCC 43067 / DSM 2661 / JAL-1 / JCM 10045 / NBRC 100440) (Methanococcus jannaschii).